A 129-amino-acid polypeptide reads, in one-letter code: Omega-scoloptoxin(05)-Ssm1a (129 aa).

Residues 1–24 form the signal peptide; it reads MPSLCIIALFGTLTFYTLIPSIHT. Positions 25 to 46 are excised as a propeptide; sequence LKCVRCDGPMSNYDCKTTYPAA.

This sequence belongs to the scoloptoxin-05 family. In terms of processing, contains 3 disulfide bonds. In terms of tissue distribution, expressed by the venom gland.

Its subcellular location is the secreted. Functionally, toxin that increase voltage-gated calcium channel (Cav) currents in DRG neurons by 70% and 120%, when 1 uM and 10 uM are tested, respectively. The sequence is that of Omega-scoloptoxin(05)-Ssm1a from Scolopendra mutilans (Chinese red-headed centipede).